A 339-amino-acid chain; its full sequence is ADP,ATP carrier protein (339 aa).

Solcar repeat units lie at residues 39–133 (MAFV…IKGL), 145–234 (RFFV…AKGV), and 246–328 (AKWA…IKKF). 5 helical membrane passes run 41–70 (FVKD…LLLQ), 110–134 (LANV…KGLF), 144–164 (WRFF…SLLI), 212–232 (VSVQ…DTAK), and 245–265 (FAKW…SYPF). Arg115 and Lys127 together coordinate ADP. Arg269 is an ADP binding site. The tract at residues 269 to 274 (RRRLMM) is important for transport activity. Positions 269–274 (RRRLMM) match the Nucleotide carrier signature motif motif. Residues 305–322 (AWSNVLRGAGGAFVLVLY) traverse the membrane as a helical segment.

This sequence belongs to the mitochondrial carrier (TC 2.A.29) family. As to quaternary structure, monomer.

Its subcellular location is the mitochondrion inner membrane. The enzyme catalyses ADP(in) + ATP(out) = ADP(out) + ATP(in). With respect to regulation, the matrix-open state (m-state) is inhibited by the membrane-permeable bongkrekic acid (BKA). The cytoplasmic-open state (c-state) is inhibited by the membrane-impermeable toxic inhibitor carboxyatractyloside (CATR). In terms of biological role, ADP:ATP antiporter that mediates import of ADP into the mitochondrial matrix for ATP synthesis, and export of ATP out to fuel the cell. Cycles between the cytoplasmic-open state (c-state) and the matrix-open state (m-state): operates by the alternating access mechanism with a single substrate-binding site intermittently exposed to either the cytosolic (c-state) or matrix (m-state) side of the inner mitochondrial membrane. The polypeptide is ADP,ATP carrier protein (Parachlorella kessleri (Green alga)).